A 358-amino-acid chain; its full sequence is Histidinol-phosphate aminotransferase (358 aa).

The residue at position 218 (K218) is an N6-(pyridoxal phosphate)lysine.

Belongs to the class-II pyridoxal-phosphate-dependent aminotransferase family. Histidinol-phosphate aminotransferase subfamily. As to quaternary structure, homodimer. Pyridoxal 5'-phosphate is required as a cofactor.

It catalyses the reaction L-histidinol phosphate + 2-oxoglutarate = 3-(imidazol-4-yl)-2-oxopropyl phosphate + L-glutamate. It functions in the pathway amino-acid biosynthesis; L-histidine biosynthesis; L-histidine from 5-phospho-alpha-D-ribose 1-diphosphate: step 7/9. The chain is Histidinol-phosphate aminotransferase from Dehalococcoides mccartyi (strain ATCC BAA-2100 / JCM 16839 / KCTC 5957 / BAV1).